The following is a 423-amino-acid chain: Tyrosine--tRNA ligase (423 aa).

Tyr-35 contributes to the L-tyrosine binding site. The 'HIGH' region motif lies at Pro-40–His-49. Tyr-170 and Gln-174 together coordinate L-tyrosine. The 'KMSKS' region motif lies at Lys-231–Ser-235. Residue Lys-234 coordinates ATP. One can recognise an S4 RNA-binding domain in the interval Gly-353–Val-419.

Belongs to the class-I aminoacyl-tRNA synthetase family. TyrS type 1 subfamily. Homodimer.

Its subcellular location is the cytoplasm. It carries out the reaction tRNA(Tyr) + L-tyrosine + ATP = L-tyrosyl-tRNA(Tyr) + AMP + diphosphate + H(+). In terms of biological role, catalyzes the attachment of tyrosine to tRNA(Tyr) in a two-step reaction: tyrosine is first activated by ATP to form Tyr-AMP and then transferred to the acceptor end of tRNA(Tyr). The chain is Tyrosine--tRNA ligase from Streptomyces griseus subsp. griseus (strain JCM 4626 / CBS 651.72 / NBRC 13350 / KCC S-0626 / ISP 5235).